Consider the following 102-residue polypeptide: NADH-quinone oxidoreductase subunit K (102 aa).

Transmembrane regions (helical) follow at residues 6 to 26, 30 to 50, and 62 to 82; these read LEHGLAVAGVLFCLGLVGLMV, ILFVLMSLEIMMNAAALAFVV, and VMFILVISLAAAEASIGLAIL.

It belongs to the complex I subunit 4L family. As to quaternary structure, NDH-1 is composed of 13 different subunits. Subunits NuoA, H, J, K, L, M, N constitute the membrane sector of the complex.

It localises to the cell inner membrane. The enzyme catalyses a quinone + NADH + 5 H(+)(in) = a quinol + NAD(+) + 4 H(+)(out). Its function is as follows. NDH-1 shuttles electrons from NADH, via FMN and iron-sulfur (Fe-S) centers, to quinones in the respiratory chain. The immediate electron acceptor for the enzyme in this species is believed to be ubiquinone. Couples the redox reaction to proton translocation (for every two electrons transferred, four hydrogen ions are translocated across the cytoplasmic membrane), and thus conserves the redox energy in a proton gradient. This is NADH-quinone oxidoreductase subunit K from Pseudomonas syringae pv. tomato (strain ATCC BAA-871 / DC3000).